Consider the following 83-residue polypeptide: Small ribosomal subunit protein bS20 (83 aa).

This sequence belongs to the bacterial ribosomal protein bS20 family.

Its function is as follows. Binds directly to 16S ribosomal RNA. The protein is Small ribosomal subunit protein bS20 of Staphylococcus haemolyticus (strain JCSC1435).